An 871-amino-acid polypeptide reads, in one-letter code: Dual O-methyltransferase/FAD-dependent monooxygenase CTB3 (871 aa).

The interval 1–429 (MMQFQRDLEA…GLLTVRSAGQ (429 aa)) is O-methyltransferase. S-adenosyl-L-methionine is bound at residue Asp279. His331 acts as the Proton acceptor in catalysis. The tract at residues 430–871 (TALSGTNTLT…NLVDCSEFVF (442 aa)) is FAD-dependent monooxygenase. Residues Glu485, Arg569, and Ala806 each contribute to the FAD site.

The protein in the C-terminal section; belongs to the paxM FAD-dependent monooxygenase family. In the N-terminal section; belongs to the class I-like SAM-binding methyltransferase superfamily. Cation-independent O-methyltransferase family. COMT subfamily.

It carries out the reaction nor-toralactone + S-adenosyl-L-methionine = toralactone + S-adenosyl-L-homocysteine + H(+). The enzyme catalyses toralactone + NADH + O2 + H(+) = 1-(3,4,5-trihydroxy-7-methoxynaphthalen-2-yl)propan-2-one + CO2 + NAD(+). It participates in mycotoxin biosynthesis. Dual O-methyltransferase/FAD-dependent monooxygenase; part of the gene cluster that mediates the biosynthesis of cercosporin, a light-activated, non-host-selective toxin. The perylenequinone chromophore of cercosporin absorbs light energy to attain an electronically-activated triplet state and produces active oxygen species such as the hydroxyl radical, superoxide, hydrogen peroxide or singlet oxygen upon reaction with oxygen molecules. These reactive oxygen species cause damage to various cellular components including lipids, proteins and nucleic acids. The first step of cercosporin biosynthesis is performed by the polyketide synthase CTB1 which catalyzes the formation of nor-toralactone. The starter unit acyltransferase (SAT) domain of CTB1 initiates polyketide extension by the selective utilization of acetyl-CoA, which is elongated to the heptaketide in the beta-ketoacyl synthase (KS) domain by successive condensations with six malonyl units introduced by the malonyl acyltransferase (MAT) domain. The product template (PT) domain catalyzes C4-C9 and C2-C11 aldol cyclizations and dehydrations to a trihydroxynaphthalene, which is thought to be delivered to the thioesterase (TE) domain for product release. The bifunctional enzyme CTB3 then methylates nor-toralactone to toralactone before conducting an unusual oxidative aromatic ring opening. The O-methyltransferase CTB2 further methylates the nascent OH-6 of the CBT3 product, blocking further oxidation at this site before the reductase CTB6 reduces the 2-oxopropyl ketone at position C7, giving naphthalene. The FAD-dependent monooxygenase CTB5 in concert with the multicopper oxidase CTB12 are responsible for homodimerization of naphthalene with CTB7 installing the dioxepine moiety, finally producing cercosporin. The fasciclin domain-containing protein CTB11 might act with CTB5 and CTB12 whereas the roles of CTB9 and CTB10 have still to be elucidated. The polypeptide is Dual O-methyltransferase/FAD-dependent monooxygenase CTB3 (Cercospora nicotianae (Barn spot disease fungus)).